Reading from the N-terminus, the 342-residue chain is S-adenosylmethionine:tRNA ribosyltransferase-isomerase (342 aa).

The protein belongs to the QueA family. Monomer.

The protein resides in the cytoplasm. It carries out the reaction 7-aminomethyl-7-carbaguanosine(34) in tRNA + S-adenosyl-L-methionine = epoxyqueuosine(34) in tRNA + adenine + L-methionine + 2 H(+). The protein operates within tRNA modification; tRNA-queuosine biosynthesis. Transfers and isomerizes the ribose moiety from AdoMet to the 7-aminomethyl group of 7-deazaguanine (preQ1-tRNA) to give epoxyqueuosine (oQ-tRNA). The protein is S-adenosylmethionine:tRNA ribosyltransferase-isomerase of Streptococcus pneumoniae (strain Hungary19A-6).